A 204-amino-acid polypeptide reads, in one-letter code: uncharacterized protein (204 aa).

This is an uncharacterized protein from Methanocaldococcus jannaschii (strain ATCC 43067 / DSM 2661 / JAL-1 / JCM 10045 / NBRC 100440) (Methanococcus jannaschii).